A 100-amino-acid polypeptide reads, in one-letter code: Aspartyl/glutamyl-tRNA(Asn/Gln) amidotransferase subunit C (100 aa).

It belongs to the GatC family. Heterotrimer of A, B and C subunits.

The enzyme catalyses L-glutamyl-tRNA(Gln) + L-glutamine + ATP + H2O = L-glutaminyl-tRNA(Gln) + L-glutamate + ADP + phosphate + H(+). It catalyses the reaction L-aspartyl-tRNA(Asn) + L-glutamine + ATP + H2O = L-asparaginyl-tRNA(Asn) + L-glutamate + ADP + phosphate + 2 H(+). Allows the formation of correctly charged Asn-tRNA(Asn) or Gln-tRNA(Gln) through the transamidation of misacylated Asp-tRNA(Asn) or Glu-tRNA(Gln) in organisms which lack either or both of asparaginyl-tRNA or glutaminyl-tRNA synthetases. The reaction takes place in the presence of glutamine and ATP through an activated phospho-Asp-tRNA(Asn) or phospho-Glu-tRNA(Gln). This Dictyoglomus thermophilum (strain ATCC 35947 / DSM 3960 / H-6-12) protein is Aspartyl/glutamyl-tRNA(Asn/Gln) amidotransferase subunit C.